The chain runs to 432 residues: MTTSATLFYRAQQVIPGGVNSPVRAFKGVGGTPVFIEKANGAYIFDIEGKQYIDYVGSWGPMILGHNHPSILSAVLKIAENGLSFGTPTPLEIELAELICQLVPSIEMVRMVNSGTEATMSAIRLARGYTKRDKILKFEGCYHGHSDSLLVKAGSGSLTLGQPSSPGVPEDFAKHTITCEYNNLQSVKNAFEQYPDQIACVIVEPVAGNMNCILPKQDFLQGLRQLCNEYGSLFIIDEVMTGFRVALGGAQSYYEVTPDLTTLGKVIGGGMPVGAFGGKKEIMQYIAPTGPVYQAGTLSGNPIAMSAGIACLNELKKEGNEQRLAMLTKKLALGLKNLANQHNIPLVVNYVGGMFGIFFTTQNEVTSYQQAIQCDIERFNLFFHKMLEQGVYLAPSAFEAGFMSLAHTDADIDRTLQAADIAFASLRSSSFS.

An N6-(pyridoxal phosphate)lysine modification is found at lysine 265.

It belongs to the class-III pyridoxal-phosphate-dependent aminotransferase family. HemL subfamily. As to quaternary structure, homodimer. Pyridoxal 5'-phosphate is required as a cofactor.

It localises to the cytoplasm. The catalysed reaction is (S)-4-amino-5-oxopentanoate = 5-aminolevulinate. The protein operates within porphyrin-containing compound metabolism; protoporphyrin-IX biosynthesis; 5-aminolevulinate from L-glutamyl-tRNA(Glu): step 2/2. This chain is Glutamate-1-semialdehyde 2,1-aminomutase, found in Histophilus somni (strain 2336) (Haemophilus somnus).